A 997-amino-acid chain; its full sequence is Mannuronan C5-epimerase AlgE5 (997 aa).

PbH1 repeat units lie at residues 133-155 (DRDVTLERVEIREMSGYGFDPHE), 157-179 (TINLTIRDSVAHDNGLDGFVADF), 180-202 (QIGGVFENNVSYNNDRHGFNIVT), 204-226 (TNDFVLSNNVAYGNGGAGLVIQR), 257-279 (AHDVTLQNAEIYGNGLYGVRVYG), 280-315 (AEDVQILDNYIHDNSQSGSYAEILLQSYDDTAGVSG), and 320-359 (TTGTWIEGNTIVGSANSTYGIQERADGTDYSSLYANSVSN). 10 Hemolysin-type calcium-binding repeats span residues 388–403 (GTTGNDTLTGSEAHET), 406–422 (GLDGNDRLNGGAGNDIL), 424–439 (GGAGRDNLTGGAGADL), 557–573 (GHAGNDTLDGAGGDDIL), 574–590 (VGGAGRDTLTGGAGADL), 695–709 (GSAGNDSLQGTAADE), 712–729 (HGGAGRDTLSGGAGADVF), 828–839 (GSDGNDTLDGGS), 846–862 (GGAGNDSLDGGAGNDIL), and 864–880 (GGAGRDTLSGGSGSDIF).

It belongs to the D-mannuronate C5-epimerase family. Ca(2+) serves as cofactor.

It localises to the secreted. The catalysed reaction is [(1-&gt;4)-beta-D-mannuronosyl](n) = [alginate](n). The protein operates within glycan biosynthesis; alginate biosynthesis. Its activity is regulated as follows. Inhibited by zinc. Its function is as follows. Converts beta-D-mannuronic acid (M) to alpha-L-guluronic acid (G), producing a polymer with gel-forming capacity, required for the formation of the cyst coat. The protein is Mannuronan C5-epimerase AlgE5 of Azotobacter vinelandii.